A 60-amino-acid chain; its full sequence is Large ribosomal subunit protein uL30 (60 aa).

This sequence belongs to the universal ribosomal protein uL30 family. As to quaternary structure, part of the 50S ribosomal subunit.

The protein is Large ribosomal subunit protein uL30 of Amoebophilus asiaticus (strain 5a2).